The primary structure comprises 432 residues: Glial fibrillary acidic protein (432 aa).

The interval 1-72 (MERRRITSAA…KETRASERAE (72 aa)) is head. Threonine 7 bears the Phosphothreonine; by AURKB and ROCK1 mark. The residue at position 12 (arginine 12) is an Omega-N-methylarginine. The residue at position 13 (serine 13) is a Phosphoserine; by AURKB and ROCK1. Residues arginine 30 and arginine 36 each carry the citrulline modification. Serine 38 bears the Phosphoserine; by AURKB and ROCK1 mark. The 309-residue stretch at 69–377 (ERAEMMELND…KLLEGEENRI (309 aa)) folds into the IF rod domain. The segment at 73–104 (MMELNDRFASYIEKVRFLEQQNKALAAELNQL) is coil 1A. The residue at position 82 (serine 82) is a Phosphoserine. The interval 105–115 (RAKEPTKLADV) is linker 1. Phosphothreonine is present on residues threonine 110 and threonine 150. The segment at 116–214 (YQAELRELRL…EEEVRELQEQ (99 aa)) is coil 1B. A linker 12 region spans residues 215 to 230 (LARQQVHVELDMAKPD). The tract at residues 231–252 (LTAALKEIRTQYEAMASSNMHE) is coil 2A. The interval 253–256 (AEEW) is linker 2. The interval 257 to 377 (YRSKFADLTD…KLLEGEENRI (121 aa)) is coil 2B. Residue arginine 270 is modified to Citrulline. Serine 323 carries the phosphoserine modification. Residues 378–432 (TIPVQTFSNLQIRETSLDTKSVSEGHLKRNIVVKTVEMRDGEVIKESKQEHKDVM) form a tail region. A Phosphothreonine modification is found at threonine 383. Residue serine 385 is modified to Phosphoserine. A citrulline mark is found at arginine 406 and arginine 416.

It belongs to the intermediate filament family. As to quaternary structure, interacts with SYNM. In terms of processing, phosphorylated by PKN1.

The protein localises to the cytoplasm. GFAP, a class-III intermediate filament, is a cell-specific marker that, during the development of the central nervous system, distinguishes astrocytes from other glial cells. In Pongo abelii (Sumatran orangutan), this protein is Glial fibrillary acidic protein (GFAP).